A 354-amino-acid chain; its full sequence is Guanine nucleotide-binding protein G(o) subunit alpha (354 aa).

Glycine 2 is lipidated: N-myristoyl glycine. Cysteine 3 is lipidated: S-palmitoyl cysteine. The 323-residue stretch at lysine 32–tyrosine 354 folds into the G-alpha domain. Residues lysine 35–threonine 48 form a G1 motif region. Residues glutamate 43, lysine 46, serine 47, threonine 48, serine 152, leucine 176, arginine 177, threonine 178, and arginine 179 each contribute to the GTP site. Serine 47 contacts Mg(2+). The G2 motif stretch occupies residues aspartate 174–threonine 182. Threonine 182 is a Mg(2+) binding site. The tract at residues phenylalanine 197–arginine 206 is G3 motif. A 5-glutamyl histamine modification is found at glutamine 205. The tract at residues isoleucine 266 to aspartate 273 is G4 motif. Positions 270, 273, and 325 each coordinate GTP. The segment at threonine 324–threonine 329 is G5 motif. A lipid anchor (S-palmitoyl cysteine) is attached at cysteine 351.

The protein belongs to the G-alpha family. G(i/o/t/z) subfamily. As to quaternary structure, g proteins are composed of 3 units; alpha, beta and gamma. The alpha chain contains the guanine nucleotide binding site. Forms a complex with GNB1 and GNG3. Interacts with RGS14. Interacts with RGS16. Interacts with RGS19. Interacts (when palmitoylated) with ADGRG3. In terms of processing, histaminylated at Gln-205 residues by TGM2.

It is found in the cell membrane. The protein localises to the membrane. It carries out the reaction GTP + H2O = GDP + phosphate + H(+). The GTPase activity is promoted by GTPAse activators, such as RGS14, RGS16 and RGS19. Guanine nucleotide-binding proteins (G proteins) function as transducers downstream of G protein-coupled receptors (GPCRs) in numerous signaling cascades. The alpha chain contains the guanine nucleotide binding site and alternates between an active, GTP-bound state and an inactive, GDP-bound state. Signaling by an activated GPCR promotes GDP release and GTP binding. The alpha subunit has a low GTPase activity that converts bound GTP to GDP, thereby terminating the signal. Both GDP release and GTP hydrolysis are modulated by numerous regulatory proteins. Signaling is mediated via effector proteins, such as adenylate cyclase. Inhibits adenylate cyclase activity, leading to decreased intracellular cAMP levels. The protein is Guanine nucleotide-binding protein G(o) subunit alpha (GNAO1) of Bos taurus (Bovine).